A 314-amino-acid polypeptide reads, in one-letter code: Nerylneryl diphosphate synthase CPT2, chloroplastic (314 aa).

The N-terminal 61 residues, 1 to 61, are a transit peptide targeting the chloroplast; the sequence is MNSSIVSQHF…MSDRGLSKIS (61 aa). Asp-97 is a catalytic residue.

It belongs to the UPP synthase family. It depends on Mg(2+) as a cofactor. Expressed in stems. Expressed in petiolules. Expressed at low levels in leaf trichomes, old leaf and roots.

It is found in the plastid. It localises to the chloroplast. The enzyme catalyses 3 isopentenyl diphosphate + dimethylallyl diphosphate = nerylneryl diphosphate + 3 diphosphate. It carries out the reaction isopentenyl diphosphate + dimethylallyl diphosphate = neryl diphosphate + diphosphate. The catalysed reaction is neryl diphosphate + isopentenyl diphosphate = (2Z,6Z)-farnesyl diphosphate + diphosphate. It catalyses the reaction (2Z,6Z)-farnesyl diphosphate + isopentenyl diphosphate = nerylneryl diphosphate + diphosphate. Uses dimethylallyl diphosphate and isopentenyl diphosphate to catalyze the cis-prenyl chain elongation and produce the 20 carbon product nerylneryl diphosphate. This chain is Nerylneryl diphosphate synthase CPT2, chloroplastic, found in Solanum lycopersicum (Tomato).